Consider the following 248-residue polypeptide: MAGHSQFKNIMHRKGRQDAVRSKMFSKLAREITVAAKQGLPDPAMNPRLRLAIQNAKAQSMPKDNIERAIKKAAGNDGENYDEVRYEGRGPGGVSVIVEALTDNRNRTASNVRAAFTKSGGSLGETGSVSFMFDRVGEIVYKPEAGDADKVMEAAIEAGAEDVQSGEDGHVILCAFEDIGEVSKALEAALGEAESIKTIWKPQTNTELDEEKARSVLKLLSVLEDDDDVQNVYTNFEVSDEVMEKLSA.

The protein belongs to the TACO1 family.

It is found in the cytoplasm. The sequence is that of Probable transcriptional regulatory protein BOV_1660 from Brucella ovis (strain ATCC 25840 / 63/290 / NCTC 10512).